Consider the following 340-residue polypeptide: tRNA N6-adenosine threonylcarbamoyltransferase (340 aa).

Residues histidine 111 and histidine 115 each coordinate Fe cation. Residues 133-137, aspartate 166, glycine 179, aspartate 183, and asparagine 272 each bind substrate; that span reads VVSGG. A Fe cation-binding site is contributed by aspartate 300.

Belongs to the KAE1 / TsaD family. It depends on Fe(2+) as a cofactor.

It localises to the cytoplasm. It carries out the reaction L-threonylcarbamoyladenylate + adenosine(37) in tRNA = N(6)-L-threonylcarbamoyladenosine(37) in tRNA + AMP + H(+). Required for the formation of a threonylcarbamoyl group on adenosine at position 37 (t(6)A37) in tRNAs that read codons beginning with adenine. Is involved in the transfer of the threonylcarbamoyl moiety of threonylcarbamoyl-AMP (TC-AMP) to the N6 group of A37, together with TsaE and TsaB. TsaD likely plays a direct catalytic role in this reaction. This Geobacter sulfurreducens (strain ATCC 51573 / DSM 12127 / PCA) protein is tRNA N6-adenosine threonylcarbamoyltransferase.